We begin with the raw amino-acid sequence, 575 residues long: Isocitrate dehydrogenase kinase/phosphatase (575 aa).

Residues 315 to 321 (APGVKGM) and lysine 336 contribute to the ATP site. Aspartate 371 is an active-site residue.

The protein belongs to the AceK family.

The protein resides in the cytoplasm. It carries out the reaction L-seryl-[isocitrate dehydrogenase] + ATP = O-phospho-L-seryl-[isocitrate dehydrogenase] + ADP + H(+). Functionally, bifunctional enzyme which can phosphorylate or dephosphorylate isocitrate dehydrogenase (IDH) on a specific serine residue. This is a regulatory mechanism which enables bacteria to bypass the Krebs cycle via the glyoxylate shunt in response to the source of carbon. When bacteria are grown on glucose, IDH is fully active and unphosphorylated, but when grown on acetate or ethanol, the activity of IDH declines drastically concomitant with its phosphorylation. The chain is Isocitrate dehydrogenase kinase/phosphatase from Yersinia pseudotuberculosis serotype O:1b (strain IP 31758).